The sequence spans 925 residues: Bifunctional imidazolonepropionase/histidine ammonia-lyase (925 aa).

The imidazolonepropionase stretch occupies residues 1–414 (MTKNSSTVFT…IKPHVRMEPF (414 aa)). The Fe(3+) site is built by H73 and H75. Zn(2+) contacts are provided by H73 and H75. 4-imidazolone-5-propanoate-binding residues include R82, Y145, and H178. Y145 provides a ligand contact to N-formimidoyl-L-glutamate. Residue H243 coordinates Fe(3+). H243 provides a ligand contact to Zn(2+). Q246 provides a ligand contact to 4-imidazolone-5-propanoate. D318 contributes to the Fe(3+) binding site. Residue D318 coordinates Zn(2+). Positions 320 and 322 each coordinate N-formimidoyl-L-glutamate. 4-imidazolone-5-propanoate is bound at residue T323. Positions 415–925 (MTIILKPGSV…SAGILPDLEA (511 aa)) are histidine ammonia-lyase. A cross-link (5-imidazolinone (Ala-Gly)) is located at residues 556–558 (ASG). At S557 the chain carries 2,3-didehydroalanine (Ser).

This sequence in the N-terminal section; belongs to the metallo-dependent hydrolases superfamily. HutI family. In the C-terminal section; belongs to the PAL/histidase family. Requires Zn(2+) as cofactor. It depends on Fe(3+) as a cofactor. In terms of processing, contains an active site 4-methylidene-imidazol-5-one (MIO), which is formed autocatalytically by cyclization and dehydration of residues Ala-Ser-Gly.

The protein localises to the cytoplasm. The catalysed reaction is 4-imidazolone-5-propanoate + H2O = N-formimidoyl-L-glutamate. It catalyses the reaction L-histidine = trans-urocanate + NH4(+). It participates in amino-acid degradation; L-histidine degradation into L-glutamate; N-formimidoyl-L-glutamate from L-histidine: step 1/3. The protein operates within amino-acid degradation; L-histidine degradation into L-glutamate; N-formimidoyl-L-glutamate from L-histidine: step 3/3. Its function is as follows. Catalyzes the hydrolytic cleavage of the carbon-nitrogen bond in imidazolone-5-propanoate to yield N-formimidoyl-L-glutamate. It is the third step in the universal histidine degradation pathway. The polypeptide is Bifunctional imidazolonepropionase/histidine ammonia-lyase (hutIH) (Brucella melitensis biotype 1 (strain ATCC 23456 / CCUG 17765 / NCTC 10094 / 16M)).